The following is a 211-amino-acid chain: 3-demethoxyubiquinol 3-hydroxylase (211 aa).

Positions 60, 90, 93, 142, 174, and 177 each coordinate Fe cation.

This sequence belongs to the COQ7 family. Fe cation serves as cofactor.

The protein localises to the cell membrane. It carries out the reaction a 5-methoxy-2-methyl-3-(all-trans-polyprenyl)benzene-1,4-diol + AH2 + O2 = a 3-demethylubiquinol + A + H2O. It participates in cofactor biosynthesis; ubiquinone biosynthesis. Its function is as follows. Catalyzes the hydroxylation of 2-nonaprenyl-3-methyl-6-methoxy-1,4-benzoquinol during ubiquinone biosynthesis. The sequence is that of 3-demethoxyubiquinol 3-hydroxylase from Francisella tularensis subsp. holarctica (strain FTNF002-00 / FTA).